The primary structure comprises 315 residues: Acetyl-coenzyme A carboxylase carboxyl transferase subunit alpha (315 aa).

Residues 32–289 (EIDLLEASLE…KQAFVDQLEQ (258 aa)) enclose the CoA carboxyltransferase C-terminal domain.

It belongs to the AccA family. Acetyl-CoA carboxylase is a heterohexamer composed of biotin carboxyl carrier protein (AccB), biotin carboxylase (AccC) and two subunits each of ACCase subunit alpha (AccA) and ACCase subunit beta (AccD).

The protein resides in the cytoplasm. It carries out the reaction N(6)-carboxybiotinyl-L-lysyl-[protein] + acetyl-CoA = N(6)-biotinyl-L-lysyl-[protein] + malonyl-CoA. Its pathway is lipid metabolism; malonyl-CoA biosynthesis; malonyl-CoA from acetyl-CoA: step 1/1. Component of the acetyl coenzyme A carboxylase (ACC) complex. First, biotin carboxylase catalyzes the carboxylation of biotin on its carrier protein (BCCP) and then the CO(2) group is transferred by the carboxyltransferase to acetyl-CoA to form malonyl-CoA. This is Acetyl-coenzyme A carboxylase carboxyl transferase subunit alpha from Staphylococcus haemolyticus (strain JCSC1435).